The chain runs to 191 residues: Recombination protein RecR (191 aa).

The C4-type zinc finger occupies Cys51 to Cys66. Residues Gly74–Pro168 enclose the Toprim domain.

Belongs to the RecR family.

May play a role in DNA repair. It seems to be involved in an RecBC-independent recombinational process of DNA repair. It may act with RecF and RecO. The sequence is that of Recombination protein RecR from Synechococcus sp. (strain CC9605).